Consider the following 257-residue polypeptide: Protein CUSTOS (257 aa).

Residues 1 to 11 (MSDLESSSSSS) are compositionally biased toward low complexity. Residues 1–72 (MSDLESSSSS…HEQDGNELQT (72 aa)) form a disordered region. Over residues 32 to 41 (QRPRGPEKPG) the composition is skewed to basic and acidic residues. At Ser55 the chain carries Phosphoserine. Thr73 carries the post-translational modification Phosphothreonine. 2 disordered regions span residues 120–157 (FTSI…RRCR) and 170–257 (SAIH…VPSN). Basic residues-rich tracts occupy residues 180–190 (KKKKRKLKKKA) and 227–237 (TKKKKRKKKTK). Positions 228-236 (KKKKRKKKT) match the Nucleolar localization signal (NLS) motif.

It belongs to the CUSTOS family.

It localises to the nucleus envelope. Its function is as follows. Plays a role in the regulation of Wnt signaling pathway during early development. The sequence is that of Protein CUSTOS from Bos taurus (Bovine).